The chain runs to 332 residues: Geranylgeranyl pyrophosphate synthase 2 (332 aa).

Isopentenyl diphosphate is bound by residues Lys-55, Arg-58, and His-87. The Mg(2+) site is built by Asp-94 and Asp-98. Arg-103 is a binding site for dimethylallyl diphosphate. Arg-104 serves as a coordination point for isopentenyl diphosphate. Lys-181, Thr-182, and Gln-218 together coordinate dimethylallyl diphosphate. Residue Asp-221 coordinates Mg(2+). Asn-225, Lys-235, and Lys-245 together coordinate dimethylallyl diphosphate.

Belongs to the FPP/GGPP synthase family. Requires Mg(2+) as cofactor.

The catalysed reaction is isopentenyl diphosphate + dimethylallyl diphosphate = (2E)-geranyl diphosphate + diphosphate. It carries out the reaction isopentenyl diphosphate + (2E)-geranyl diphosphate = (2E,6E)-farnesyl diphosphate + diphosphate. The enzyme catalyses isopentenyl diphosphate + (2E,6E)-farnesyl diphosphate = (2E,6E,10E)-geranylgeranyl diphosphate + diphosphate. Geranylgeranyl pyrophosphate synthase; part of the gene cluster 3 that mediates the biosynthesis of an isoprenoid secondary metabolite. The protein is Geranylgeranyl pyrophosphate synthase 2 (GGS2) of Zymoseptoria tritici (strain CBS 115943 / IPO323) (Speckled leaf blotch fungus).